We begin with the raw amino-acid sequence, 291 residues long: Ribosome maturation factor RimP (291 aa).

Residues 188–291 (ERGLGEDEEF…GGKPKAKETH (104 aa)) are disordered. Over residues 193-211 (EDEEFEDDADEVFEGDEAD) the composition is skewed to acidic residues. Basic and acidic residues-rich tracts occupy residues 212 to 237 (EKAAKDAANAERANAKKAADKAEKRA) and 245 to 254 (AKSEKAEKSQ).

Belongs to the RimP family.

Its subcellular location is the cytoplasm. Its function is as follows. Required for maturation of 30S ribosomal subunits. This chain is Ribosome maturation factor RimP, found in Azorhizobium caulinodans (strain ATCC 43989 / DSM 5975 / JCM 20966 / LMG 6465 / NBRC 14845 / NCIMB 13405 / ORS 571).